Consider the following 616-residue polypeptide: D-glucuronyl C5-epimerase (616 aa).

Topologically, residues 1–12 are cytoplasmic; sequence MKCLRWRSNRHR. Residues 13–29 form a helical; Signal-anchor for type II membrane protein membrane-spanning segment; that stretch reads IYLLVACGALFLLNRHL. Residues 30 to 616 are Extracellular-facing; that stretch reads TQEESRIDEE…YAYGKRAKHN (587 aa). Substrate is bound by residues Tyr136, 141–143, and Gln169; that span reads RDR. 4 N-linked (GlcNAc...) asparagine glycosylation sites follow: Asn188, Asn232, Asn267, and Asn471. Substrate-binding positions include Tyr504, Arg562, and 574-580; that span reads RWDYHAV.

It belongs to the D-glucuronyl C5-epimerase family. As to quaternary structure, homodimer. As to expression, expression in comma stage embryos is strong in the hypodermis and intestine and weaker in the head region. In late embryos, larval, and adult stages, expressed primarily in hypodermis and intestine.

Its subcellular location is the cell membrane. It localises to the secreted. It is found in the extracellular space. The protein resides in the extracellular matrix. The protein localises to the basement membrane. It catalyses the reaction [heparosan-N-sulfate](n) = [heparan-N-sulfate](n). The protein operates within glycan metabolism; heparan sulfate biosynthesis. It participates in glycan metabolism; heparin biosynthesis. Converts D-glucuronic acid residues adjacent to N-sulfate sugar residues to L-iduronic acids. Plays a role in the early migration of AQR and PQR neurons, which descend from the Q neuroblasts. The sequence is that of D-glucuronyl C5-epimerase (hse-5) from Caenorhabditis elegans.